Reading from the N-terminus, the 251-residue chain is Probable transcriptional regulatory protein Swol_1435 (251 aa).

The disordered stretch occupies residues M1–K23.

This sequence belongs to the TACO1 family.

It is found in the cytoplasm. This chain is Probable transcriptional regulatory protein Swol_1435, found in Syntrophomonas wolfei subsp. wolfei (strain DSM 2245B / Goettingen).